The following is a 428-amino-acid chain: E3 ubiquitin-protein ligase RNF128 (428 aa).

An N-terminal signal peptide occupies residues 1 to 38; sequence MGPPPGAGVSCRGGCGFSRLLAWCFLLALSPQAPGSRG. Residues asparagine 48, asparagine 59, and asparagine 101 are each glycosylated (N-linked (GlcNAc...) asparagine). Residues 75-183 enclose the PA domain; the sequence is SPLEPVAGVL…LKGTKILQSI (109 aa). A helical transmembrane segment spans residues 208 to 228; that stretch reads IFFVSVSFFIITAATVGYFIF. An RING-type; atypical zinc finger spans residues 277-318; it reads CAVCIELYKPNDLVRILTCNHIFHKTCVDPWLLEHRTCPMCK. A disordered region spans residues 346–428; that stretch reads ISNSASSHEE…QETAVREIKS (83 aa). Residues 360–371 are compositionally biased toward polar residues; sequence ETASSGYASVQG.

In terms of processing, auto-ubiquitinated. Controls the development of T-cell clonal anergy by ubiquitination.

The protein localises to the cytoplasm. It localises to the endomembrane system. It is found in the cytoskeleton. The protein resides in the perinuclear region. The catalysed reaction is S-ubiquitinyl-[E2 ubiquitin-conjugating enzyme]-L-cysteine + [acceptor protein]-L-lysine = [E2 ubiquitin-conjugating enzyme]-L-cysteine + N(6)-ubiquitinyl-[acceptor protein]-L-lysine.. It participates in protein modification; protein ubiquitination. E3 ubiquitin-protein ligase that catalyzes 'Lys-27', 'Lys-48'- or 'Lys-63'-linked polyubiquitin chains formation and plays a role in different biological processes such as modulation of immune response, cytoskeletal dynamics or protein homeostasis. Inhibits IL2 and IL4 transcription, thereby playing an important role in the induction of the anergic phenotype, a long-term stable state of T-lymphocyte unresponsiveness to antigenic stimulation associated with the blockade of interleukin production. Ubiquitinates ARPC5 with 'Lys-48' linkages and COR1A with 'Lys-63' linkages leading to their degradation, down-regulation of these cytoskeletal components results in impaired lamellipodium formation and reduced accumulation of F-actin at the immunological synapse. Functions in the patterning of the dorsal ectoderm; sensitizes ectoderm to respond to neural-inducing signals. Plays a positive role in innate immune response by promoting 'Lys-63'-linked ubiquitination of TBK1 after RNA- or DNA-virus infection. Regulates alveolar macrophage activation and neutrophil infiltration by interacting with TLR4, targeting it for degradation, and inhibiting NF-kappa-B activation, hence decreasing pro-inflammatory cytokines. Negatively regulates the IL-3/STAT5 signaling pathway by facilitating 'Lys-27'-linked polyubiquitination of IL3RA leading to its degradation via lysosomal pathway. Directly regulates the N-glycosylation process in the endoplasmic reticulum by targeting the glycosyl-transferase RPN1 for ubiquitination and degradation. Other substrates targeted for degradation by RNF128 include transmembrane proteins CD40L, CD83 or the tetraspanin CD151. The chain is E3 ubiquitin-protein ligase RNF128 (RNF128) from Homo sapiens (Human).